The following is a 289-amino-acid chain: Spore coat polysaccharide biosynthesis protein SpsD (289 aa).

The N-acetyltransferase domain maps to 137 to 289 (FELGPPEPGD…YHIWPGKEAK (153 aa)).

Its pathway is spore coat biogenesis; spore coat polysaccharide biosynthesis. The chain is Spore coat polysaccharide biosynthesis protein SpsD (spsD) from Bacillus subtilis (strain 168).